The chain runs to 311 residues: MQYQIERIDHQIADDRSQTGTFLIGPLERGQATTLGNSLRRVLMGGLEGSAVTAVRIAGINHEYATIPGVREDVLDILLNCKQLSINSSNPELEIGRLVASGPLDVKANDIQFSSQVEIVDGEKPIATIQEGHNLELEIHVERGVGYRPVDRKNQETTAIDLLQIDAVFMPVKRVNFSIDETAVAEGGTGRERLKMEVVTDGSTSPDDAIAEAANQLIELFQPLATVTMVEEIPEEPEPSPEAQIPLEELNLSVRAYNCLKRAQVNSVSDLMGFSYEDLLEIKNFGSKSADEVIEALERIGISIPQSRTSV.

Positions 1 to 228 (MQYQIERIDH…ELFQPLATVT (228 aa)) are alpha N-terminal domain (alpha-NTD). The segment at 239–311 (PSPEAQIPLE…ISIPQSRTSV (73 aa)) is alpha C-terminal domain (alpha-CTD).

Belongs to the RNA polymerase alpha chain family. In cyanobacteria the RNAP catalytic core is composed of 2 alpha, 1 beta, 1 beta', 1 gamma and 1 omega subunit. When a sigma factor is associated with the core the holoenzyme is formed, which can initiate transcription.

The catalysed reaction is RNA(n) + a ribonucleoside 5'-triphosphate = RNA(n+1) + diphosphate. Functionally, DNA-dependent RNA polymerase catalyzes the transcription of DNA into RNA using the four ribonucleoside triphosphates as substrates. In Prochlorococcus marinus (strain MIT 9312), this protein is DNA-directed RNA polymerase subunit alpha.